The chain runs to 124 residues: S-adenosylmethionine decarboxylase proenzyme (124 aa).

The active-site Schiff-base intermediate with substrate; via pyruvic acid is the Ser63. Ser63 carries the pyruvic acid (Ser); by autocatalysis modification. His68 functions as the Proton acceptor; for processing activity in the catalytic mechanism. Cys83 functions as the Proton donor; for catalytic activity in the catalytic mechanism.

It belongs to the prokaryotic AdoMetDC family. Type 1 subfamily. In terms of assembly, heterotetramer of two alpha and two beta chains arranged as a dimer of alpha/beta heterodimers. Pyruvate is required as a cofactor. In terms of processing, is synthesized initially as an inactive proenzyme. Formation of the active enzyme involves a self-maturation process in which the active site pyruvoyl group is generated from an internal serine residue via an autocatalytic post-translational modification. Two non-identical subunits are generated from the proenzyme in this reaction, and the pyruvate is formed at the N-terminus of the alpha chain, which is derived from the carboxyl end of the proenzyme. The post-translation cleavage follows an unusual pathway, termed non-hydrolytic serinolysis, in which the side chain hydroxyl group of the serine supplies its oxygen atom to form the C-terminus of the beta chain, while the remainder of the serine residue undergoes an oxidative deamination to produce ammonia and the pyruvoyl group blocking the N-terminus of the alpha chain.

The enzyme catalyses S-adenosyl-L-methionine + H(+) = S-adenosyl 3-(methylsulfanyl)propylamine + CO2. It participates in amine and polyamine biosynthesis; S-adenosylmethioninamine biosynthesis; S-adenosylmethioninamine from S-adenosyl-L-methionine: step 1/1. In terms of biological role, catalyzes the decarboxylation of S-adenosylmethionine to S-adenosylmethioninamine (dcAdoMet), the propylamine donor required for the synthesis of the polyamines spermine and spermidine from the diamine putrescine. The protein is S-adenosylmethionine decarboxylase proenzyme of Thermoanaerobacter pseudethanolicus (strain ATCC 33223 / 39E) (Clostridium thermohydrosulfuricum).